Reading from the N-terminus, the 538-residue chain is Fructooligosaccharide ABC transporter substrate-binding protein FusA (538 aa).

A signal peptide spans 1-22 (MKFKTFSKSAVLLTASLAVLAA). Cys23 carries N-palmitoyl cysteine lipidation. The S-diacylglycerol cysteine moiety is linked to residue Cys23. Glu167 provides a ligand contact to substrate. The Ca(2+) site is built by Asp215, Asn217, Asn219, Glu221, Asp223, and Glu224. Asn235 lines the substrate pocket. The Ca(2+) site is built by Asp263, Phe264, Asp267, and Asn268. Trp314, Asn318, Lys353, Trp384, Arg419, and Glu423 together coordinate substrate.

The protein belongs to the bacterial solute-binding protein 1 family. As to quaternary structure, the complex is composed of two ATP-binding proteins (MsmK), two transmembrane proteins (FusB and FusC) and a solute-binding protein (FusA).

Its subcellular location is the cell membrane. Part of the ABC transporter complex FusABC-MsmK involved in short- and long-chain fructooligosaccharide (FOS) import. Required for the utilization of long-chain FOSs. Binds kestose, nystose, fructofuranosyl-nystose and inulin, but not sucrose. Has a preference for long-chain FOSs (tetrasaccharides and larger). This Streptococcus pneumoniae serotype 4 (strain ATCC BAA-334 / TIGR4) protein is Fructooligosaccharide ABC transporter substrate-binding protein FusA.